Consider the following 361-residue polypeptide: POU domain, class 3, transcription factor 4-A (361 aa).

Disordered stretches follow at residues 100–131 (HVNH…GQPI), 150–189 (LTPP…EETP), and 333–361 (EKRM…CNEL). Positions 119–131 (AHNSSLTSSGQPI) are enriched in polar residues. The span at 165 to 183 (VLREPNDHVDLGSHHCQDH) shows a compositional bias: basic and acidic residues. Residues 186 to 260 (EETPTSDELE…LLNKWLEEAD (75 aa)) form the POU-specific domain. Positions 278 to 337 (KRKKRTSIEVSVKGVLETHFLKCPKPAALEITSLADSLQLEKEVVRVWFCNRRQKEKRMT) form a DNA-binding region, homeobox.

Belongs to the POU transcription factor family. Class-3 subfamily. From embryonic stage 10, expressed in the Spemann's organizer. During gastrulation, expressed in both the involuting mesoderm and the overlying neuroectoderm. During the neural plate and neural fold stages, expressed in the entire neuroectoderm with expression in discrete regions of the developing nervous system persisting at later stages. Transiently expressed in the pronephros from stages 24-32. In adults, expressed in the kidney and brain.

Its subcellular location is the nucleus. In terms of biological role, transcriptional activator. Induces neural-specific gene expression to act as a key regulator of neural differentiation. This is POU domain, class 3, transcription factor 4-A (pou3f4-a) from Xenopus laevis (African clawed frog).